We begin with the raw amino-acid sequence, 458 residues long: (R)-6-hydroxynicotine oxidase (458 aa).

Residues 33-204 (RHLQRPSLIA…TEVEVQLYEL (172 aa)) form the FAD-binding PCMH-type domain. FAD contacts are provided by residues 67 to 73 (RSGGHNP), 129 to 130 (HP), 134 to 137 (FCGL), G144, T195, N413, and N450. Position 71 is a pros-8alpha-FAD histidine (H71).

The protein belongs to the oxygen-dependent FAD-linked oxidoreductase family. As to quaternary structure, monomer. It depends on FAD as a cofactor.

The protein localises to the cytoplasm. The enzyme catalyses (R)-6-hydroxynicotine + O2 + H2O = 6-hydroxypseudooxynicotine + H2O2. It carries out the reaction (R)-6-hydroxynicotine + O2 = 6-hydroxy-N-methylmyosmine + H2O2. It functions in the pathway alkaloid degradation; nicotine degradation; 6-hydroxypseudooxynicotine from nicotine (R-isomer route): step 2/2. With respect to regulation, inhibited by (S)-6-hydroxynicotine. Inhibited by high concentrations of phenanthroline. Involved in the degradation of D-nicotine. Catalyzes the oxidation of (R)-6-hydroxynicotine (6-hydroxy-D-nicotine) to 6-hydroxypseudooxynicotine. Oxidation of the pyrrolidine ring of (R)-6-hydroxynicotine leads to the formation of the optically inactive 6-hydroxy-N-methylmyosmine, which hydrolyzes spontaneously to 6-hydroxypseudooxynicotine. Acts with absolute stereospecificity on the D-form of 6-hydroxynicotine. Shows lower activity with (R)-6-hydroxynornicotine, and weak activity with (R)-4-(1-methylpyrrolidine-2-yl)phenol, (R)-6-chloronicotine and (R)-nicotine. In Paenarthrobacter nicotinovorans (Arthrobacter nicotinovorans), this protein is (R)-6-hydroxynicotine oxidase.